The sequence spans 213 residues: Pyrrolidone-carboxylate peptidase (213 aa).

Catalysis depends on residues Glu78, Cys141, and His165.

It belongs to the peptidase C15 family. As to quaternary structure, homotetramer.

It is found in the cytoplasm. It carries out the reaction Release of an N-terminal pyroglutamyl group from a polypeptide, the second amino acid generally not being Pro.. Functionally, removes 5-oxoproline from various penultimate amino acid residues except L-proline. The chain is Pyrrolidone-carboxylate peptidase from Clostridium perfringens (strain SM101 / Type A).